We begin with the raw amino-acid sequence, 361 residues long: Cobalt-precorrin-5B C(1)-methyltransferase (361 aa).

Belongs to the CbiD family.

It catalyses the reaction Co-precorrin-5B + S-adenosyl-L-methionine = Co-precorrin-6A + S-adenosyl-L-homocysteine. It functions in the pathway cofactor biosynthesis; adenosylcobalamin biosynthesis; cob(II)yrinate a,c-diamide from sirohydrochlorin (anaerobic route): step 6/10. Catalyzes the methylation of C-1 in cobalt-precorrin-5B to form cobalt-precorrin-6A. The protein is Cobalt-precorrin-5B C(1)-methyltransferase of Methylorubrum extorquens (strain CM4 / NCIMB 13688) (Methylobacterium extorquens).